A 105-amino-acid polypeptide reads, in one-letter code: Large ribosomal subunit protein bL21c (105 aa).

This sequence belongs to the bacterial ribosomal protein bL21 family. In terms of assembly, part of the 50S ribosomal subunit.

It is found in the plastid. It localises to the chloroplast. In terms of biological role, this protein binds to 23S rRNA. The protein is Large ribosomal subunit protein bL21c of Trieres chinensis (Marine centric diatom).